The primary structure comprises 367 residues: tRNA (guanine(26)-N(2))-dimethyltransferase (367 aa).

The Trm1 methyltransferase domain maps to 1 to 365 (MRVSEGRVTV…ADVVEIREAT (365 aa)). Residues Arg-34, Arg-64, Asp-79, Asp-105, and Ala-106 each contribute to the S-adenosyl-L-methionine site. Zn(2+) contacts are provided by Cys-234, Cys-237, Cys-254, and Cys-257.

It belongs to the class I-like SAM-binding methyltransferase superfamily. Trm1 family.

It carries out the reaction guanosine(26) in tRNA + 2 S-adenosyl-L-methionine = N(2)-dimethylguanosine(26) in tRNA + 2 S-adenosyl-L-homocysteine + 2 H(+). In terms of biological role, dimethylates a single guanine residue at position 26 of a number of tRNAs using S-adenosyl-L-methionine as donor of the methyl groups. The polypeptide is tRNA (guanine(26)-N(2))-dimethyltransferase (Haloarcula marismortui (strain ATCC 43049 / DSM 3752 / JCM 8966 / VKM B-1809) (Halobacterium marismortui)).